Here is an 81-residue protein sequence, read N- to C-terminus: Omega-conotoxin-like TxMKLT1-0223 (81 aa).

Positions 1–22 (MKLTCMMIVAVLFLTAWTFVTA) are cleaved as a signal peptide. Positions 23-52 (VPHSSNALENLYLKARHEMENPEASKLNTR) are excised as a propeptide. Intrachain disulfides connect C55/C72, C62/C76, and C71/C80.

The protein belongs to the conotoxin O1 superfamily. In terms of tissue distribution, expressed by the venom duct.

It is found in the secreted. Functionally, omega-conotoxins act at presynaptic membranes, they bind and block voltage-gated calcium channels (Cav). This chain is Omega-conotoxin-like TxMKLT1-0223, found in Conus textile (Cloth-of-gold cone).